A 258-amino-acid polypeptide reads, in one-letter code: Phosphate import ATP-binding protein PstB (258 aa).

The region spanning 5–247 (IDVSGLNAYY…ERIFSNPSVQ (243 aa)) is the ABC transporter domain. Residue 37–44 (GPSGCGKS) coordinates ATP.

It belongs to the ABC transporter superfamily. Phosphate importer (TC 3.A.1.7) family. As to quaternary structure, the complex is composed of two ATP-binding proteins (PstB), two transmembrane proteins (PstC and PstA) and a solute-binding protein (PstS).

Its subcellular location is the cell membrane. The enzyme catalyses phosphate(out) + ATP + H2O = ADP + 2 phosphate(in) + H(+). In terms of biological role, part of the ABC transporter complex PstSACB involved in phosphate import. Responsible for energy coupling to the transport system. The sequence is that of Phosphate import ATP-binding protein PstB from Streptomyces coelicolor (strain ATCC BAA-471 / A3(2) / M145).